The following is a 464-amino-acid chain: ATP-dependent protease ATPase subunit HslU (464 aa).

ATP is bound by residues Ile19, 61-66 (GVGKTE), Asp277, Glu342, and Arg414.

The protein belongs to the ClpX chaperone family. HslU subfamily. As to quaternary structure, a double ring-shaped homohexamer of HslV is capped on each side by a ring-shaped HslU homohexamer. The assembly of the HslU/HslV complex is dependent on binding of ATP.

Its subcellular location is the cytoplasm. Functionally, ATPase subunit of a proteasome-like degradation complex; this subunit has chaperone activity. The binding of ATP and its subsequent hydrolysis by HslU are essential for unfolding of protein substrates subsequently hydrolyzed by HslV. HslU recognizes the N-terminal part of its protein substrates and unfolds these before they are guided to HslV for hydrolysis. This chain is ATP-dependent protease ATPase subunit HslU, found in Lactobacillus gasseri (strain ATCC 33323 / DSM 20243 / BCRC 14619 / CIP 102991 / JCM 1131 / KCTC 3163 / NCIMB 11718 / NCTC 13722 / AM63).